Here is a 203-residue protein sequence, read N- to C-terminus: Small ribosomal subunit protein uS5 (203 aa).

The 64-residue stretch at 49–112 folds into the S5 DRBM domain; the sequence is FEERVVKIKR…KNANNNLIKV (64 aa).

It belongs to the universal ribosomal protein uS5 family. As to quaternary structure, part of the 30S ribosomal subunit. Contacts proteins S4 and S8.

In terms of biological role, with S4 and S12 plays an important role in translational accuracy. Functionally, located at the back of the 30S subunit body where it stabilizes the conformation of the head with respect to the body. The chain is Small ribosomal subunit protein uS5 from Ureaplasma parvum serovar 3 (strain ATCC 700970).